The chain runs to 117 residues: Ig heavy chain V region 5-76 (117 aa).

Positions 1–19 (MNFVLSLIFLALILKGVQC) are cleaved as a signal peptide. The segment at 20 to 49 (EVHLVESGGGLVKPGGSLKLSCVVSGFTFN) is framework-1. The cysteines at positions 41 and 115 are disulfide-linked. The complementarity-determining-1 stretch occupies residues 50-54 (KYAMS). Residues 55 to 68 (WVRQTPEKRLEWVA) are framework-2. The complementarity-determining-2 stretch occupies residues 69–85 (TISSGGLYTYYPDSVKG). Residues 86–117 (RFTISRDNAGNTLYLQMSSLRSEDTAMYYCAR) form a framework-3 region.

This is Ig heavy chain V region 5-76 from Mus musculus (Mouse).